The primary structure comprises 1235 residues: Cullin-associated NEDD8-dissociated protein 2 (1235 aa).

Ser2 bears the N-acetylserine mark. HEAT repeat units follow at residues 2 to 39 (STGA…KDSI), 44 to 81 (DSER…KVKE), 83 to 119 (QVEN…ELPP), 129 to 167 (NVCR…RLGA), 171 to 208 (TFHA…ACST), 210 to 246 (LFVE…SVGR), 254 to 291 (AHLD…KCPK), 326 to 367 (TEDS…SRPD), 371 to 408 (DFHC…HTRP), 431 to 468 (AQVP…VLPG), 516 to 553 (PHLP…TLWP), 564 to 603 (PYVG…HLGD), 607 to 644 (DDLE…LRLD), 647 to 684 (PILA…SQGL), 689 to 726 (PAVR…TQPS), 730 to 769 (EVSG…TRPP), 771 to 812 (VEYS…ALSA), 856 to 893 (GPQR…GNLP), 895 to 930 (FLPF…DNLK), 932 to 965 (YVED…LVFV), 966 to 1002 (NPPY…DQPH), 1006 to 1043 (PLLK…NKPS), 1047 to 1083 (DLLD…DDGL), 1104 to 1140 (LDMC…LCPA), 1156 to 1193 (TCTA…NPEV), and 1203 to 1235 (SAQI…MELS). The disordered stretch occupies residues 314–345 (YDHDSDDEEQMETEDSEFSEQESEDEYSDDDD). Positions 317 to 345 (DSDDEEQMETEDSEFSEQESEDEYSDDDD) are enriched in acidic residues.

This sequence belongs to the CAND family. As to quaternary structure, binds TBP, CNOT3 and UBE3C. Post-translationally, ubiquitinated and targeted for proteasomal degradation. In terms of tissue distribution, highly expressed in embryonic limb buds.

It is found in the nucleus. Probable assembly factor of SCF (SKP1-CUL1-F-box protein) E3 ubiquitin ligase complexes that promotes the exchange of the substrate-recognition F-box subunit in SCF complexes, thereby playing a key role in the cellular repertoire of SCF complexes. This Mus musculus (Mouse) protein is Cullin-associated NEDD8-dissociated protein 2 (Cand2).